Reading from the N-terminus, the 380-residue chain is Flap endonuclease 1 (380 aa).

Positions 1-104 (MGIQGLAKLI…GELAKRSERR (104 aa)) are N-domain. The residue at position 19 (Arg-19) is a Symmetric dimethylarginine; by PRMT5. Asp-34 serves as a coordination point for Mg(2+). 2 residues coordinate DNA: Arg-47 and Arg-70. The residue at position 80 (Lys-80) is an N6-acetyllysine. Asp-86 is a Mg(2+) binding site. 2 positions are modified to symmetric dimethylarginine; by PRMT5: Arg-100 and Arg-104. Residues 122-253 (EVEKFTKRLV…KRAVDLIQKH (132 aa)) are I-domain. Mg(2+) contacts are provided by Glu-158, Glu-160, Asp-179, and Asp-181. Glu-158 serves as a coordination point for DNA. The residue at position 187 (Ser-187) is a Phosphoserine; by CDK2. Arg-192 is subject to Symmetric dimethylarginine; by PRMT5. At Ser-197 the chain carries Phosphoserine. Residues Gly-231 and Asp-233 each coordinate DNA. Asp-233 is a Mg(2+) binding site. Phosphoserine occurs at positions 255, 293, and 335. The tract at residues 327-380 (RLSKSRQGSTQGRLDDFFKVTGSLSSAKRKEPEPKGSTKKKAKTGAAGKFKRGK) is disordered. Thr-336 carries the post-translational modification Phosphothreonine. The segment at 336–344 (TQGRLDDFF) is interaction with PCNA. Lys-354 carries the post-translational modification N6-acetyllysine. Basic residues predominate over residues 363–380 (STKKKAKTGAAGKFKRGK). A Phosphothreonine modification is found at Thr-364. N6-acetyllysine occurs at positions 375, 377, and 380.

The protein belongs to the XPG/RAD2 endonuclease family. FEN1 subfamily. In terms of assembly, interacts with PCNA. Three molecules of FEN1 bind to one PCNA trimer with each molecule binding to one PCNA monomer. PCNA stimulates the nuclease activity without altering cleavage specificity. The C-terminal domain binds EP300; can bind simultaneously to both PCNA and EP300. Interacts with DDX11; this interaction is direct and increases flap endonuclease activity of FEN1. Interacts with WDR4; regulating its endonuclease activity. Interacts with POLB. Mg(2+) serves as cofactor. In terms of processing, acetylated by EP300. Acetylation inhibits both endonuclease and exonuclease activity. Acetylation also reduces DNA-binding activity but does not affect interaction with PCNA or EP300. Phosphorylation upon DNA damage induces relocalization to the nuclear plasma. Phosphorylation at Ser-187 by CDK2 occurs during late S-phase and results in dissociation from PCNA. Post-translationally, methylation at Arg-192 by PRMT5 impedes Ser-187 phosphorylation and increases interaction with PCNA.

Its subcellular location is the nucleus. The protein localises to the nucleolus. It is found in the nucleoplasm. The protein resides in the mitochondrion. Its function is as follows. Structure-specific nuclease with 5'-flap endonuclease and 5'-3' exonuclease activities involved in DNA replication and repair. During DNA replication, cleaves the 5'-overhanging flap structure that is generated by displacement synthesis when DNA polymerase encounters the 5'-end of a downstream Okazaki fragment. It enters the flap from the 5'-end and then tracks to cleave the flap base, leaving a nick for ligation. Also involved in the long patch base excision repair (LP-BER) pathway, by cleaving within the apurinic/apyrimidinic (AP) site-terminated flap. Acts as a genome stabilization factor that prevents flaps from equilibrating into structures that lead to duplications and deletions. Also possesses 5'-3' exonuclease activity on nicked or gapped double-stranded DNA, and exhibits RNase H activity. Also involved in replication and repair of rDNA and in repairing mitochondrial DNA. This is Flap endonuclease 1 from Homo sapiens (Human).